Here is a 121-residue protein sequence, read N- to C-terminus: Large ribosomal subunit protein uL14c (121 aa).

The protein belongs to the universal ribosomal protein uL14 family. In terms of assembly, part of the 50S ribosomal subunit.

The protein resides in the plastid. It localises to the chloroplast. Functionally, binds to 23S rRNA. In Pelargonium hortorum (Common geranium), this protein is Large ribosomal subunit protein uL14c.